The sequence spans 465 residues: Cysteine--tRNA ligase (465 aa).

Cysteine 28 is a binding site for Zn(2+). The short motif at 30-40 is the 'HIGH' region element; that stretch reads MTVYDYCHLGH. Positions 209, 234, and 238 each coordinate Zn(2+). A 'KMSKS' region motif is present at residues 266-270; that stretch reads KMSKS. An ATP-binding site is contributed by lysine 269.

It belongs to the class-I aminoacyl-tRNA synthetase family. Monomer. It depends on Zn(2+) as a cofactor.

It localises to the cytoplasm. The catalysed reaction is tRNA(Cys) + L-cysteine + ATP = L-cysteinyl-tRNA(Cys) + AMP + diphosphate. This chain is Cysteine--tRNA ligase, found in Nitrosomonas europaea (strain ATCC 19718 / CIP 103999 / KCTC 2705 / NBRC 14298).